The primary structure comprises 344 residues: Adenosine deaminase (344 aa).

Residues His14 and His16 each coordinate Zn(2+). Positions 16, 18, and 177 each coordinate substrate. A Zn(2+)-binding site is contributed by His204. Glu207 functions as the Proton donor in the catalytic mechanism. Position 284 (Asp284) interacts with Zn(2+).

It belongs to the metallo-dependent hydrolases superfamily. Adenosine and AMP deaminases family. Adenosine deaminase subfamily. Zn(2+) is required as a cofactor.

It catalyses the reaction adenosine + H2O + H(+) = inosine + NH4(+). It carries out the reaction 2'-deoxyadenosine + H2O + H(+) = 2'-deoxyinosine + NH4(+). In terms of biological role, catalyzes the hydrolytic deamination of adenosine and 2-deoxyadenosine. This chain is Adenosine deaminase, found in Haemophilus ducreyi (strain 35000HP / ATCC 700724).